The sequence spans 473 residues: MKTDTPSLETPQAARLRRRQLIRQLLERDKTPLAILFMAAVVGTLVGLAAVAFDKGVAWLQNQRMEALVHTADNYPLLLTVAFLCSAVLAMFGYFLVRKYAPEAGGSGIPEIEGALEDQRPVRWWRVLPVKFFGGLGTLGGGMVLGREGPTVQIGGNIGRMVLDIFRLKGDEARHTLLATGAAAGLAAAFNAPLAGILFIIEEMRPQFRYTLISIKAVFIGVIMSTIMYRIFNHEVALIDVGKLSDAPLNTLWLYLILGIIFGIFGPIFNKWVLGMQDLLHRVHGGNITKWVLMGGAIGGLCGLLGFVAPATSGGGFNLIPIATAGNFSMGMLVFIFVARVITTLLCFSSGAPGGIFAPMLALGTVLGTAFGMVVVELFPQYHLEAGTFAIAGMGALLAASIRAPLTGIILVLEMTDNYQLILPMIITGLGATLLAQFTGGKPLYSEILARTLAKQEAEQLARSKAASASENT.

Residues 1–32 (MKTDTPSLETPQAARLRRRQLIRQLLERDKTP) are Cytoplasmic-facing. Residues 33–69 (LAILFMAAVVGTLVGLAAVAFDKGVAWLQNQRMEALV) traverse the membrane as a helical segment. The Periplasmic segment spans residues 70–76 (HTADNYP). A helical transmembrane segment spans residues 77–100 (LLLTVAFLCSAVLAMFGYFLVRKY). Positions 106–110 (GSGIP) match the Selectivity filter part_1 motif. Ser107 is a binding site for chloride. Positions 109–116 (IPEIEGAL) form an intramembrane region, helical. Residues 117-123 (EDQRPVR) lie on the Cytoplasmic side of the membrane. A run of 2 helical transmembrane segments spans residues 124-141 (WWRV…TLGG) and 148-166 (EGPT…LDIF). The Selectivity filter part_2 signature appears at 146 to 150 (GREGP). At 167–176 (RLKGDEARHT) the chain is on the cytoplasmic side. Intramembrane regions (helical) lie at residues 177 to 189 (LLAT…LAAA) and 193 to 201 (PLAGILFII). Residues 202–214 (EEMRPQFRYTLIS) are Cytoplasmic-facing. Residues 215-232 (IKAVFIGVIMSTIMYRIF) traverse the membrane as a helical segment. The Periplasmic portion of the chain corresponds to 233 to 252 (NHEVALIDVGKLSDAPLNTL). A helical transmembrane segment spans residues 253–281 (WLYLILGIIFGIFGPIFNKWVLGMQDLLH). At 282–287 (RVHGGN) the chain is on the cytoplasmic side. The chain crosses the membrane as a helical span at residues 288 to 309 (ITKWVLMGGAIGGLCGLLGFVA). At 310–329 (PATSGGGFNLIPIATAGNFS) the chain is on the periplasmic side. Helical transmembrane passes span 330-349 (MGML…LCFS) and 355-376 (GIFA…MVVV). The Selectivity filter part_3 signature appears at 355–359 (GIFAP). Chloride contacts are provided by Ile356 and Phe357. Residues 377-386 (ELFPQYHLEA) are Periplasmic-facing. An intramembrane region (helical) is located at residues 387-401 (GTFAIAGMGALLAAS). The segment at residues 402-404 (IRA) is an intramembrane region (note=Loop between two helices). The segment at residues 405–416 (PLTGIILVLEMT) is an intramembrane region (helical). The note=Loop between two helices intramembrane region spans 417–421 (DNYQL). The chain crosses the membrane as a helical span at residues 422-438 (ILPMIITGLGATLLAQF). Topologically, residues 439 to 473 (TGGKPLYSEILARTLAKQEAEQLARSKAASASENT) are cytoplasmic. Tyr445 is a binding site for chloride.

Belongs to the chloride channel (TC 2.A.49) family. ClcA subfamily. Homodimer.

The protein localises to the cell inner membrane. The enzyme catalyses 2 chloride(in) + H(+)(out) = 2 chloride(out) + H(+)(in). Proton-coupled chloride transporter. Functions as antiport system and exchanges two chloride ions for 1 proton. Probably acts as an electrical shunt for an outwardly-directed proton pump that is linked to amino acid decarboxylation, as part of the extreme acid resistance (XAR) response. In Shigella boydii serotype 4 (strain Sb227), this protein is H(+)/Cl(-) exchange transporter ClcA.